The chain runs to 133 residues: Holo-[acyl-carrier-protein] synthase (133 aa).

Mg(2+)-binding residues include Asp8 and Glu57.

It belongs to the P-Pant transferase superfamily. AcpS family. The cofactor is Mg(2+).

It localises to the cytoplasm. The enzyme catalyses apo-[ACP] + CoA = holo-[ACP] + adenosine 3',5'-bisphosphate + H(+). Its function is as follows. Transfers the 4'-phosphopantetheine moiety from coenzyme A to a Ser of acyl-carrier-protein. This is Holo-[acyl-carrier-protein] synthase from Bartonella tribocorum (strain CIP 105476 / IBS 506).